A 160-amino-acid chain; its full sequence is Cytochrome c-type biogenesis protein CcmE (160 aa).

Topologically, residues 1–8 (MSAPRKTR) are cytoplasmic. Residues 9 to 29 (LYAILAVVCGAVLTIALMLYA) traverse the membrane as a helical; Signal-anchor for type II membrane protein segment. The Periplasmic segment spans residues 30 to 160 (LSSNIDLFYT…PAAGPEGKRL (131 aa)). Residues histidine 130 and tyrosine 134 each coordinate heme.

Belongs to the CcmE/CycJ family.

Its subcellular location is the cell inner membrane. Heme chaperone required for the biogenesis of c-type cytochromes. Transiently binds heme delivered by CcmC and transfers the heme to apo-cytochromes in a process facilitated by CcmF and CcmH. This is Cytochrome c-type biogenesis protein CcmE from Pectobacterium atrosepticum (strain SCRI 1043 / ATCC BAA-672) (Erwinia carotovora subsp. atroseptica).